The chain runs to 102 residues: RNA-binding protein Hfq (102 aa).

The 60-residue stretch at 9–68 (DPFLNALRRERVPVSIYLVNGIKLQGQIESFDQFVILLKNTVSQMVYKHAISTVVPSRPV) folds into the Sm domain. Positions 63–102 (VPSRPVSHHSNNAGGGASNNYHHGSNVQGSTAQQDSEETE) are disordered. Positions 70 to 88 (HHSNNAGGGASNNYHHGSN) are enriched in low complexity.

It belongs to the Hfq family. In terms of assembly, homohexamer.

Its function is as follows. RNA chaperone that binds small regulatory RNA (sRNAs) and mRNAs to facilitate mRNA translational regulation in response to envelope stress, environmental stress and changes in metabolite concentrations. Also binds with high specificity to tRNAs. The sequence is that of RNA-binding protein Hfq from Salmonella choleraesuis (strain SC-B67).